Here is a 429-residue protein sequence, read N- to C-terminus: 3-phosphoshikimate 1-carboxyvinyltransferase (429 aa).

3 residues coordinate 3-phosphoshikimate: Lys20, Ser21, and Arg25. Residue Lys20 participates in phosphoenolpyruvate binding. Phosphoenolpyruvate is bound by residues Gly89 and Arg118. Residues Ser164, Ser165, Gln166, Ser192, Asp311, and Lys338 each coordinate 3-phosphoshikimate. Gln166 lines the phosphoenolpyruvate pocket. Asp311 acts as the Proton acceptor in catalysis. Residues Arg342 and Arg384 each coordinate phosphoenolpyruvate.

It belongs to the EPSP synthase family. In terms of assembly, monomer.

It localises to the cytoplasm. It catalyses the reaction 3-phosphoshikimate + phosphoenolpyruvate = 5-O-(1-carboxyvinyl)-3-phosphoshikimate + phosphate. Its pathway is metabolic intermediate biosynthesis; chorismate biosynthesis. Its function is as follows. Catalyzes the transfer of the enolpyruvyl moiety of phosphoenolpyruvate (PEP) to the 5-hydroxyl of shikimate-3-phosphate (S3P) to produce enolpyruvyl shikimate-3-phosphate and inorganic phosphate. The chain is 3-phosphoshikimate 1-carboxyvinyltransferase from Methanococcus maripaludis (strain DSM 14266 / JCM 13030 / NBRC 101832 / S2 / LL).